Consider the following 1642-residue polypeptide: DNA-directed RNA polymerase I subunit RPA1 (1642 aa).

Zn(2+)-binding residues include Cys66, Cys69, Cys75, and His78. Residues Asp565, Asp567, and Asp569 each coordinate Mg(2+). The interval 939–951 (PQDFFFHCMAGRE) is bridging helix. Positions 1337-1428 (DADKDDDNDL…GNDNDGDDKA (92 aa)) are disordered. Residues 1340 to 1350 (KDDDNDLDNGD) show a composition bias toward acidic residues. Basic and acidic residues predominate over residues 1351 to 1361 (EVGRSKAKAND). Acidic residues-rich tracts occupy residues 1362–1373 (DDSSDDNDDDDA) and 1386–1424 (KDYD…DNDG). Residues Ser1364 and Ser1365 each carry the phosphoserine modification.

Belongs to the RNA polymerase beta' chain family. In terms of assembly, component of the RNA polymerase I (Pol I) complex consisting of at least 13 subunits. Phosphorylated.

Its subcellular location is the nucleus. It localises to the nucleolus. It carries out the reaction RNA(n) + a ribonucleoside 5'-triphosphate = RNA(n+1) + diphosphate. In terms of biological role, DNA-dependent RNA polymerase catalyzes the transcription of DNA into RNA using the four ribonucleoside triphosphates as substrates. Largest and catalytic core component of RNA polymerase I which synthesizes ribosomal RNA precursors. Forms the polymerase active center together with the second largest subunit. A single stranded DNA template strand of the promoter is positioned within the central active site cleft of Pol I. A bridging helix emanates from RPA1 and crosses the cleft near the catalytic site and is thought to promote translocation of Pol I by acting as a ratchet that moves the RNA-DNA hybrid through the active site by switching from straight to bent conformations at each step of nucleotide addition. The polypeptide is DNA-directed RNA polymerase I subunit RPA1 (RpI1) (Drosophila melanogaster (Fruit fly)).